A 131-amino-acid chain; its full sequence is Ribosome-binding factor A (131 aa).

It belongs to the RbfA family. Monomer. Binds 30S ribosomal subunits, but not 50S ribosomal subunits or 70S ribosomes.

The protein resides in the cytoplasm. Its function is as follows. One of several proteins that assist in the late maturation steps of the functional core of the 30S ribosomal subunit. Associates with free 30S ribosomal subunits (but not with 30S subunits that are part of 70S ribosomes or polysomes). Required for efficient processing of 16S rRNA. May interact with the 5'-terminal helix region of 16S rRNA. This Vibrio vulnificus (strain CMCP6) protein is Ribosome-binding factor A.